Reading from the N-terminus, the 320-residue chain is Zinc finger Ran-binding domain-containing protein 2 (320 aa).

A Phosphoserine modification is found at S9. A RanBP2-type 1 zinc finger spans residues 9–40; the sequence is SDGDWICPDKKCGNVNFARRTSCNRCGREKTT. An N6-acetyllysine mark is found at K18, K54, and K92. The RanBP2-type 2 zinc finger occupies 65-94; sequence SANDWQCKTCSNVNWARRSECNMCNTPKYA. Residues 117-320 form a disordered region; the sequence is REESDGEYDE…QVIGENTKQP (204 aa). 5 positions are modified to phosphoserine: S120, S153, S181, S188, and S193. A compositionally biased stretch (acidic residues) spans 150-163; that stretch reads DKESEGEEEDEDED. Positions 151–320 are required for nuclear targeting; that stretch reads KESEGEEEDE…QVIGENTKQP (170 aa). Basic residues predominate over residues 196–210; the sequence is KKSNRRSRSKSRSSH. Low complexity-rich tracts occupy residues 211-224 and 232-242; these read SRSS…SSSR and RSSSSSQSRSR. A compositionally biased stretch (basic residues) spans 251-273; the sequence is SRGSKSRSSSRSHRGSSSPRKRS.

The protein belongs to the ZRANB2 family. Interacts with the C-terminal half of SNRP70/U1-70K, the Arg/Ser-rich domain of AKAP17A as well as with U2AF1 and CLK1. In terms of processing, phosphorylated on Ser-310 upon DNA damage, probably by ATM or ATR.

The protein resides in the nucleus. Its function is as follows. Splice factor required for alternative splicing of TRA2B/SFRS10 transcripts. Binds to ssRNA containing the consensus sequence 5'-AGGUAA-3'. May interfere with constitutive 5'-splice site selection. The protein is Zinc finger Ran-binding domain-containing protein 2 of Pongo abelii (Sumatran orangutan).